The following is a 230-amino-acid chain: PKHD-type hydroxylase Xfasm12_1709 (230 aa).

A Fe2OG dioxygenase domain is found at Arg78 to Ser182. The Fe cation site is built by His96, Asp98, and His163. 2-oxoglutarate is bound at residue Arg173.

It depends on Fe(2+) as a cofactor. Requires L-ascorbate as cofactor.

In Xylella fastidiosa (strain M12), this protein is PKHD-type hydroxylase Xfasm12_1709.